Consider the following 1374-residue polypeptide: DNA-directed RNA polymerase subunit beta (1374 aa).

This sequence belongs to the RNA polymerase beta chain family. In terms of assembly, the RNAP catalytic core consists of 2 alpha, 1 beta, 1 beta' and 1 omega subunit. When a sigma factor is associated with the core the holoenzyme is formed, which can initiate transcription.

It catalyses the reaction RNA(n) + a ribonucleoside 5'-triphosphate = RNA(n+1) + diphosphate. DNA-dependent RNA polymerase catalyzes the transcription of DNA into RNA using the four ribonucleoside triphosphates as substrates. This chain is DNA-directed RNA polymerase subunit beta, found in Paracidovorax citrulli (strain AAC00-1) (Acidovorax citrulli).